Reading from the N-terminus, the 597-residue chain is MERPAPLAVLPFSDPAHALSLLRGLSQLRAERKFLDVTLEAAGGRDFPAHRAVLAAASPYFRAMFAGQLRESRAERVRLHGVPPDMLQLLLDFSYTGRVAVSGDNAEPLLRAADLLQFPAVKEACGAFLQQQLDLANCLDMQDFAEAFSCSGLASAAQRFILRHVGELGAEQLERLPLARLLRYLRDDGLCVPKEEAAYQLALRWVRADPPRRAAHWPQLLEAVRLPFVRRFYLLAHVEAEPLVARCPPCLRLLREARDFQAARYDRHDRGPCPRMRPRPSTGLAEILVLVGGCDQDCDELVTVDCYNPQTGQWRYLAEFPDHLGGGYSIVALGNDIYVTGGSDGSRLYDCVWRYNSSVNEWAEVAPMLKAREYHSSSVLDGLLYVVAADSTERYDHTTDSWEALQPMTYPMDNCSTTACRGRLYAIGSLAGKETMVMQCYDPDTDLWSLVDCGQLPPWSFAPKTATLNGLMYFVRDDSAEVDVYNPTRNEWDKIPSMNQVHVGGSLAVLGGKLYVSGGYDNTFELSDVVEAYDPETRAWSVVGRLPEPTFWHGSVSIFRQFMPQTFSGGRGFELDSGSDDMDPGRPRPPRDPDELH.

In terms of domain architecture, BTB spans 35–103; the sequence is LDVTLEAAGG…SYTGRVAVSG (69 aa). The BACK domain maps to 138–239; it reads CLDMQDFAEA…RRFYLLAHVE (102 aa). Kelch repeat units lie at residues 287-335, 336-382, 384-422, 423-470, 472-512, and 513-560; these read ILVL…ALGN, DIYV…VLDG, LYVVAADSTERYDHTTDSWEALQPMTYPMDNCSTTACRG, RLYA…TLNG, MYFV…VLGG, and KLYV…SIFR. Residues 570–597 are disordered; it reads GRGFELDSGSDDMDPGRPRPPRDPDELH. Positions 583–597 are enriched in basic and acidic residues; sequence DPGRPRPPRDPDELH.

In terms of assembly, component of the BCR(KLHL21) E3 ubiquitin ligase complex, at least composed of CUL3, KLHL21 and RBX1.

Its subcellular location is the cytoplasm. The protein resides in the cytoskeleton. The protein localises to the spindle. Its pathway is protein modification; protein ubiquitination. Its function is as follows. Substrate-specific adapter of a BCR (BTB-CUL3-RBX1) E3 ubiquitin-protein ligase complex required for efficient chromosome alignment and cytokinesis. The BCR(KLHL21) E3 ubiquitin ligase complex regulates localization of the chromosomal passenger complex (CPC) from chromosomes to the spindle midzone in anaphase and mediates the ubiquitination of AURKB. Ubiquitination of AURKB by BCR(KLHL21) E3 ubiquitin ligase complex may not lead to its degradation by the proteasome. The chain is Kelch-like protein 21 (KLHL21) from Homo sapiens (Human).